The primary structure comprises 775 residues: Aconitate hydratase, mitochondrial (775 aa).

The N-terminal 25 residues, methionine 1–aspartate 25, are a transit peptide targeting the mitochondrion. Substrate-binding positions include glutamine 95 and aspartate 188–histidine 190. A glycan (N-linked (GlcNAc...) asparagine) is linked at asparagine 337. [4Fe-4S] cluster is bound at residue cysteine 381. The N-linked (GlcNAc...) asparagine glycan is linked to asparagine 383. Residues cysteine 444 and cysteine 447 each contribute to the [4Fe-4S] cluster site. Substrate is bound at residue arginine 470. The N-linked (GlcNAc...) asparagine glycan is linked to asparagine 471. Positions 475 and 603 each coordinate substrate. Asparagine 608 carries an N-linked (GlcNAc...) asparagine glycan. Serine 666–arginine 667 lines the substrate pocket. 2 N-linked (GlcNAc...) asparagine glycosylation sites follow: asparagine 754 and asparagine 763.

This sequence belongs to the aconitase/IPM isomerase family. In terms of assembly, monomer. [4Fe-4S] cluster is required as a cofactor.

It localises to the mitochondrion. The enzyme catalyses citrate = D-threo-isocitrate. The protein operates within carbohydrate metabolism; tricarboxylic acid cycle; isocitrate from oxaloacetate: step 2/2. In terms of biological role, catalyzes the isomerization of citrate to isocitrate via cis-aconitate. The chain is Aconitate hydratase, mitochondrial from Arthroderma benhamiae (strain ATCC MYA-4681 / CBS 112371) (Trichophyton mentagrophytes).